The chain runs to 349 residues: MKEVGIVGYGSDLPKYRIKAEDIAGAWGKDAQAIKRGLVVNEKSVPGPDEDTATIAVQSARRALSRAGINPKDIGAVYVGSESHPYAVKPTSGIVAEACGVSPDFTAADLEFACKAGTAGIQMCMGLVGSEMMEYAMAVGADTAQGAPGDALEYTAAAGGAAFIIGAKKEEFIAKFNGTYSYTTDTPDFWRREHEHYPKHGGRFTGEPAYFKHVLNGAKGMMEKMGTTSKDYDYCVFHQPNGKFYLTAAKKLGFTEEQYKYGLLTPYLGNTYSGAVPLGLSNILDHAKADDRIFVVSYGSGAGSDAFDITVTDRISEVVDKEITTEKLLEQKKYVDYAVYLKYRGKIRM.

2 residues coordinate (3S)-3-hydroxy-3-methylglutaryl-CoA: D30 and A31. E82 (proton donor/acceptor) is an active-site residue. C114 and T155 together coordinate (3S)-3-hydroxy-3-methylglutaryl-CoA. C114 serves as the catalytic Acyl-thioester intermediate. A CoA-binding site is contributed by R203. (3S)-3-hydroxy-3-methylglutaryl-CoA contacts are provided by T205 and H238. The active-site Proton donor/acceptor is the H238. CoA is bound at residue K243. Residues N270 and S300 each coordinate (3S)-3-hydroxy-3-methylglutaryl-CoA.

This sequence belongs to the thiolase-like superfamily. Archaeal HMG-CoA synthase family. Interacts with acetoacetyl-CoA thiolase that catalyzes the precedent step in the pathway and with a DUF35 protein. The acetoacetyl-CoA thiolase/HMG-CoA synthase complex channels the intermediate via a fused CoA-binding site, which allows for efficient coupling of the endergonic thiolase reaction with the exergonic HMGCS reaction.

The enzyme catalyses acetoacetyl-CoA + acetyl-CoA + H2O = (3S)-3-hydroxy-3-methylglutaryl-CoA + CoA + H(+). It functions in the pathway metabolic intermediate biosynthesis; (R)-mevalonate biosynthesis; (R)-mevalonate from acetyl-CoA: step 2/3. Catalyzes the condensation of acetyl-CoA with acetoacetyl-CoA to form 3-hydroxy-3-methylglutaryl-CoA (HMG-CoA). Functions in the mevalonate (MVA) pathway leading to isopentenyl diphosphate (IPP), a key precursor for the biosynthesis of isoprenoid compounds that are building blocks of archaeal membrane lipids. The polypeptide is Hydroxymethylglutaryl-CoA synthase (Methanococcus maripaludis (strain DSM 14266 / JCM 13030 / NBRC 101832 / S2 / LL)).